A 231-amino-acid chain; its full sequence is Flagellar L-ring protein (231 aa).

An N-terminal signal peptide occupies residues methionine 1–glycine 18. The N-palmitoyl cysteine moiety is linked to residue cysteine 19. Residue cysteine 19 is the site of S-diacylglycerol cysteine attachment.

Belongs to the FlgH family. The basal body constitutes a major portion of the flagellar organelle and consists of four rings (L,P,S, and M) mounted on a central rod.

It is found in the cell outer membrane. The protein localises to the bacterial flagellum basal body. In terms of biological role, assembles around the rod to form the L-ring and probably protects the motor/basal body from shearing forces during rotation. In Pseudomonas putida (strain ATCC 700007 / DSM 6899 / JCM 31910 / BCRC 17059 / LMG 24140 / F1), this protein is Flagellar L-ring protein.